Here is a 37-residue protein sequence, read N- to C-terminus: Cytochrome b6-f complex subunit 5 (37 aa).

The helical transmembrane segment at 5–25 (LLFGIVLGLIPITLAGLFVTA) threads the bilayer.

It belongs to the PetG family. In terms of assembly, the 4 large subunits of the cytochrome b6-f complex are cytochrome b6, subunit IV (17 kDa polypeptide, PetD), cytochrome f and the Rieske protein, while the 4 small subunits are PetG, PetL, PetM and PetN. The complex functions as a dimer.

The protein localises to the plastid. Its subcellular location is the chloroplast thylakoid membrane. In terms of biological role, component of the cytochrome b6-f complex, which mediates electron transfer between photosystem II (PSII) and photosystem I (PSI), cyclic electron flow around PSI, and state transitions. PetG is required for either the stability or assembly of the cytochrome b6-f complex. The polypeptide is Cytochrome b6-f complex subunit 5 (Lemna minor (Common duckweed)).